The following is a 56-amino-acid chain: Large ribosomal subunit protein bL33 (56 aa).

It belongs to the bacterial ribosomal protein bL33 family.

This chain is Large ribosomal subunit protein bL33 (rpmG), found in Rickettsia prowazekii (strain Madrid E).